Here is a 126-residue protein sequence, read N- to C-terminus: Aspartate 1-decarboxylase (126 aa).

Serine 25 functions as the Schiff-base intermediate with substrate; via pyruvic acid in the catalytic mechanism. Serine 25 is subject to Pyruvic acid (Ser). Threonine 57 provides a ligand contact to substrate. The active-site Proton donor is the tyrosine 58. Residue 73-75 (GAA) participates in substrate binding.

Belongs to the PanD family. As to quaternary structure, heterooctamer of four alpha and four beta subunits. It depends on pyruvate as a cofactor. In terms of processing, is synthesized initially as an inactive proenzyme, which is activated by self-cleavage at a specific serine bond to produce a beta-subunit with a hydroxyl group at its C-terminus and an alpha-subunit with a pyruvoyl group at its N-terminus.

The protein resides in the cytoplasm. It catalyses the reaction L-aspartate + H(+) = beta-alanine + CO2. It participates in cofactor biosynthesis; (R)-pantothenate biosynthesis; beta-alanine from L-aspartate: step 1/1. Functionally, catalyzes the pyruvoyl-dependent decarboxylation of aspartate to produce beta-alanine. This is Aspartate 1-decarboxylase from Pseudomonas fluorescens.